We begin with the raw amino-acid sequence, 1279 residues long: Mediator of DNA damage checkpoint protein 1 (1279 aa).

The interval 1–22 is disordered; the sequence is MENTQVIDWDAEEEEETEISSG. An interaction with CHEK2 region spans residues 1 to 150; sequence MENTQVIDWD…PRSLLTIEKT (150 aa). Residues 2-222 are interaction with the MRN complex; sequence ENTQVIDWDA…SSPFGLGSDT (221 aa). T4 is modified (phosphothreonine). The segment covering 9-18 has biased composition (acidic residues); the sequence is WDAEEEEETE. Residues 54-105 enclose the FHA domain; it reads NVVGRSPDCSVALPFPSISKQHAVIEISAWNKAPILQDCGSLNGTQIVKPPR. T146 carries the post-translational modification Phosphothreonine. Disordered stretches follow at residues 156-394, 409-634, and 714-744; these read RSQN…EEVS, LWSG…KHAK, and ETSEPIDTHEAHGSQPSLPGEPPGHQHPVPT. Residues S168 and S176 each carry the phosphoserine modification. Residues 179 to 192 are compositionally biased toward polar residues; that stretch reads SVANGSRNTASPSA. Residues S198 and S220 each carry the phosphoserine modification. At T222 the chain carries Phosphothreonine. Basic and acidic residues predominate over residues 264-277; the sequence is TKDKFKDTKMKEEA. Residues 278 to 292 are compositionally biased toward low complexity; sequence GSAGVPVGSVVEGSP. S298 bears the Phosphoserine mark. T300 is modified (phosphothreonine). Position 314 is a phosphoserine (S314). T316 carries the phosphothreonine modification. Phosphoserine is present on residues S350 and S354. Position 356 is a phosphothreonine (T356). S372 and S380 each carry phosphoserine. Positions 381-393 are enriched in acidic residues; the sequence is DTDEEERGEEEEV. T382 carries the post-translational modification Phosphothreonine. A phosphoserine mark is found at S394, S411, S421, S434, and S438. Over residues 421–435 the composition is skewed to polar residues; that stretch reads SQPQVLVERSQSASG. Phosphothreonine is present on T440. The residue at position 457 (S457) is a Phosphoserine. T466 is subject to Phosphothreonine. Phosphoserine is present on residues S488, S489, S550, S587, and S589. Over residues 545–561 the composition is skewed to polar residues; sequence QEGSSSPVADIRMSQQP. Basic and acidic residues predominate over residues 620–634; it reads GREREAHVGGTKHAK. Residues S730 and S745 each carry the phosphoserine modification. The residue at position 764 (K764) is an N6-acetyllysine. The disordered stretch occupies residues 772 to 1086; it reads QMMPDGKASG…TKPNQEAAAP (315 aa). 3 positions are modified to phosphoserine: S793, S801, and S824. Positions 798–817 are enriched in low complexity; that stretch reads ASASPQSLLTSQSQKQSTPQ. 3 stretches are compositionally biased toward polar residues: residues 862 to 889, 901 to 929, and 942 to 956; these read TCPTNQPAASRPTSRPTRGRANRSSTRT, QPSTSTEQPGIPNLTSQVTEGRAHSTSVN, and PLTSAEQSVTSNLNP. The residue at position 889 (T889) is a Phosphothreonine. Position 951 is a phosphothreonine (T951). K991 is covalently cross-linked (Glycyl lysine isopeptide (Lys-Gly) (interchain with G-Cter in SUMO2)). Over residues 994–1014 the composition is skewed to low complexity; sequence STPAEPEPQSSASQSSGASEA. Phosphoserine is present on residues S1008, S1009, S1012, and S1016. Residues 1032 to 1047 are compositionally biased toward basic and acidic residues; that stretch reads VVKEEDPGEIQVKEEP. Residue K1034 forms a Glycyl lysine isopeptide (Lys-Gly) (interchain with G-Cter in SUMO1); alternate linkage. K1034 participates in a covalent cross-link: Glycyl lysine isopeptide (Lys-Gly) (interchain with G-Cter in SUMO2); alternate. Position 1054 is a phosphothreonine (T1054). 2 consecutive BRCT domains span residues 1085–1163 and 1184–1275; these read APKV…DYLV and RERR…FVLS.

As to quaternary structure, homodimer. Interacts with H2AX, which requires phosphorylation of H2AX on 'Ser-139'. Interacts with the MRN complex, composed of MRE11, RAD50, and NBN. Interacts with CHEK2, which requires ATM-mediated phosphorylation of 'Thr-68' within the FHA domain of CHEK2. Interacts constitutively with the BRCA1-BARD1 complex, SMC1A and TP53BP1. Interacts with ATM and FANCD2, and these interactions are reduced upon DNA damage. Also interacts with the PRKDC complex, composed of XRCC6/KU70, XRCC5/KU80 and PRKDC/XRCC7. This interaction may be required for PRKDC autophosphorylation, which is essential for DNA double strand break (DSB) repair. When phosphorylated by ATM, interacts with RNF8 (via FHA domain). Interacts with CEP164. When phosphorylated, interacts with APTX (via FHA-like domain). Interacts (when phosphorylated) with TOPBP1; promoting TOPBP1 localization to DNA damage sites during mitosis. Interacts (when phosphorylated) with NBN; promoting NBN and MRN complex localization to DNA damage sites. In terms of processing, phosphorylated upon exposure to ionizing radiation (IR), ultraviolet radiation (UV), and hydroxyurea (HU). Phosphorylation in response to IR requires ATM, NBN, and possibly CHEK2. Also phosphorylated during the G2/M phase of the cell cycle and during activation of the mitotic spindle checkpoint. Phosphorylation at Thr-4 by ATM stabilizes and enhances homodimerization via the FHA domain. Phosphorylated at Ser-168 and Ser-198 by CK2 in response to DNA damage during mitosis, promoting interaction with TOPBP1. Phosphorylated by CK2 in response to DNA damage, promoting interaction with NBN and recruitment of the MRN complex to DNA damage sites. Post-translationally, sumoylation at Lys-1034 by PIAS4 following DNA damage promotes ubiquitin-mediated degradation. Ubiquitinated by RNF4, leading to proteasomal degradation; undergoes 'Lys-48'-linked polyubiquitination.

The protein localises to the nucleus. The protein resides in the chromosome. Its function is as follows. Histone reader protein required for checkpoint-mediated cell cycle arrest in response to DNA damage within both the S phase and G2/M phases of the cell cycle. Specifically recognizes and binds histone H2AX phosphorylated at 'Ser-139', a marker of DNA damage, serving as a scaffold for the recruitment of DNA repair and signal transduction proteins to discrete foci of DNA damage sites. Also required for downstream events subsequent to the recruitment of these proteins. These include phosphorylation and activation of the ATM, CHEK1 and CHEK2 kinases, and stabilization of TP53/p53 and apoptosis. ATM and CHEK2 may also be activated independently by a parallel pathway mediated by TP53BP1. Required for chromosomal stability during mitosis by promoting recruitment of TOPBP1 to DNA double strand breaks (DSBs): TOPBP1 forms filamentous assemblies that bridge MDC1 and tether broken chromosomes during mitosis. Required for the repair of DSBs via homologous recombination by promoting recruitment of NBN component of the MRN complex to DSBs. This is Mediator of DNA damage checkpoint protein 1 (Mdc1) from Rattus norvegicus (Rat).